The sequence spans 70 residues: Small ribosomal subunit protein bS21 (70 aa).

This sequence belongs to the bacterial ribosomal protein bS21 family.

The polypeptide is Small ribosomal subunit protein bS21 (Helicobacter pylori (strain P12)).